An 84-amino-acid polypeptide reads, in one-letter code: Toxin To7 (84 aa).

Residues 1–20 (MSIFPIVLALLLIGLEETEA) form the signal peptide. Residues 21-83 (LDGYPLSKIN…KMYPGSSPCY (63 aa)) form the LCN-type CS-alpha/beta domain. Disulfide bonds link Cys-32-Cys-82, Cys-36-Cys-59, Cys-42-Cys-64, and Cys-46-Cys-66.

As to expression, expressed by the venom gland.

It is found in the secreted. Its function is as follows. Inhibits voltage-gated sodium channels (Nav). The protein is Toxin To7 of Tityus obscurus (Amazonian scorpion).